The chain runs to 260 residues: 33 kDa inner dynein arm light chain, axonemal (260 aa).

The disordered stretch occupies residues 1–66 (MIPPNASLVK…PVESQKAQQT (66 aa)). Positions 177 to 260 (MRKALQAEQG…LEGIIAPNKK (84 aa)) form a coiled coil.

This sequence belongs to the inner dynein arm light chain family. In terms of processing, may undergo some post-translational modifications that shift its mobility on SDS gels.

In terms of biological role, may play a dynamic role in flagellar motility. This is 33 kDa inner dynein arm light chain, axonemal from Strongylocentrotus purpuratus (Purple sea urchin).